A 298-amino-acid polypeptide reads, in one-letter code: Pyruvate synthase subunit PorB (298 aa).

Residues Cys-19, Cys-22, Cys-47, and Cys-218 each contribute to the [4Fe-4S] cluster site.

As to quaternary structure, heterotetramer of one alpha, one beta, one delta and one gamma chain. It depends on [4Fe-4S] cluster as a cofactor.

It carries out the reaction 2 oxidized [2Fe-2S]-[ferredoxin] + pyruvate + CoA = 2 reduced [2Fe-2S]-[ferredoxin] + acetyl-CoA + CO2 + H(+). In Methanocaldococcus jannaschii (strain ATCC 43067 / DSM 2661 / JAL-1 / JCM 10045 / NBRC 100440) (Methanococcus jannaschii), this protein is Pyruvate synthase subunit PorB (porB).